Reading from the N-terminus, the 189-residue chain is Putative manganese efflux pump MntP (189 aa).

6 helical membrane passes run 6 to 26 (IFGI…AAGV), 39 to 59 (LAWH…YAGL), 71 to 91 (WIAF…SFDA), 106 to 126 (LVLL…SLSV), 131 to 151 (VWMP…GGLM), and 169 to 189 (VGAG…GVFY).

The protein belongs to the MntP (TC 9.B.29) family.

It is found in the cell inner membrane. Probably functions as a manganese efflux pump. The protein is Putative manganese efflux pump MntP of Desulfosudis oleivorans (strain DSM 6200 / JCM 39069 / Hxd3) (Desulfococcus oleovorans).